The primary structure comprises 281 residues: NADPH-dependent 7-cyano-7-deazaguanine reductase (281 aa).

Valine 87–serine 89 provides a ligand contact to substrate. Serine 89–lysine 90 contacts NADPH. Cysteine 188 acts as the Thioimide intermediate in catalysis. Aspartate 195 functions as the Proton donor in the catalytic mechanism. Histidine 227 to glutamate 228 contacts substrate. Residue arginine 256–glycine 257 coordinates NADPH.

The protein belongs to the GTP cyclohydrolase I family. QueF type 2 subfamily. In terms of assembly, homodimer.

The protein resides in the cytoplasm. It carries out the reaction 7-aminomethyl-7-carbaguanine + 2 NADP(+) = 7-cyano-7-deazaguanine + 2 NADPH + 3 H(+). The protein operates within tRNA modification; tRNA-queuosine biosynthesis. In terms of biological role, catalyzes the NADPH-dependent reduction of 7-cyano-7-deazaguanine (preQ0) to 7-aminomethyl-7-deazaguanine (preQ1). The chain is NADPH-dependent 7-cyano-7-deazaguanine reductase from Aliivibrio fischeri (strain MJ11) (Vibrio fischeri).